We begin with the raw amino-acid sequence, 301 residues long: Mitochondrial substrate carrier family protein Z (301 aa).

Over 1–19 (MTGKEENKQQQHVNFPWKR) the chain is Mitochondrial intermembrane. Solcar repeat units lie at residues 14-101 (NFPW…FTEQ), 116-200 (QQFG…ISDY), and 210-293 (LPVW…VMGI). A helical membrane pass occupies residues 20–37 (LVAGAVAGTADVWACHPL). The Mitochondrial matrix portion of the chain corresponds to 38–65 (DRIKTQLQNNPGKSIVGTFGDIVSKGKG). Residues 66–86 (FTGGVNALYEGILPMTAEAIF) form a helical membrane-spanning segment. Residues 87–117 (KVGIRYFAFSWFTEQYKTTVYKGETLNKKQQ) lie on the Mitochondrial intermembrane side of the membrane. Residues 118–138 (FGANLLGGAFAGTIESFVVVI) traverse the membrane as a helical segment. The Mitochondrial matrix portion of the chain corresponds to 139-174 (PCELLKVRHMTQEHNKSFGTVFRDVLREEGFQGLYK). A helical membrane pass occupies residues 175 to 191 (GGSATLLRQITNHMIRF). Over 192-212 (PTFYAISDYLKGGDHSVHLPV) the chain is Mitochondrial intermembrane. Residues 213–229 (WQNLSAGAIAGTASTLF) form a helical membrane-spanning segment. Topologically, residues 230 to 275 (NNPLDTIKTRMQKQGQNQTTMQVVRGIYQETGVKGYWAGVIPRILR) are mitochondrial matrix. A helical membrane pass occupies residues 276 to 296 (VAPGQAITWAVVELVMGILEP). Over 297-301 (SSKKH) the chain is Mitochondrial intermembrane.

This sequence belongs to the mitochondrial carrier (TC 2.A.29) family.

The protein resides in the mitochondrion inner membrane. Mitochondrial solute carriers shuttle metabolites, nucleotides, and cofactors through the mitochondrial inner membrane. In Dictyostelium discoideum (Social amoeba), this protein is Mitochondrial substrate carrier family protein Z (mcfZ).